The chain runs to 425 residues: Monoacylglycerol lipase ABHD2 (425 aa).

Over 1–9 (MNAMMETSE) the chain is Cytoplasmic. The helical; Signal-anchor for type II membrane protein transmembrane segment at 10 to 30 (LPAVFDGVKLAAVAAVLYVIV) threads the bilayer. The Extracellular portion of the chain corresponds to 31–425 (RCLNLKSPTA…DTELVEADLE (395 aa)). The AB hydrolase-1 domain maps to 128-382 (MVICPGIANH…HGGHLGFFEG (255 aa)). The N-linked (GlcNAc...) asparagine glycan is linked to asparagine 136. Serine 207 (nucleophile) is an active-site residue. Residues aspartate 345 and histidine 376 each act as charge relay system in the active site. Asparagine 410 carries N-linked (GlcNAc...) asparagine glycosylation.

It belongs to the AB hydrolase superfamily. AB hydrolase 4 family.

It localises to the cell membrane. The catalysed reaction is Hydrolyzes glycerol monoesters of long-chain fatty acids.. The enzyme catalyses an acetyl ester + H2O = an aliphatic alcohol + acetate + H(+). It catalyses the reaction a triacylglycerol + H2O = a diacylglycerol + a fatty acid + H(+). It carries out the reaction 2-(5Z,8Z,11Z,14Z-eicosatetraenoyl)-glycerol + H2O = glycerol + (5Z,8Z,11Z,14Z)-eicosatetraenoate + H(+). The catalysed reaction is a butanoate ester + H2O = an aliphatic alcohol + butanoate + H(+). The enzyme catalyses hexadecanoate ester + H2O = an aliphatic alcohol + hexadecanoate + H(+). Acylglycerol lipase activity is activated upon binding to progesterone. Progesterone-dependent acylglycerol lipase that catalyzes hydrolysis of endocannabinoid arachidonoylglycerol (AG) from cell membrane. Acts as a progesterone receptor: progesterone-binding activates the acylglycerol lipase activity, mediating degradation of 1-arachidonoylglycerol (1AG) and 2-arachidonoylglycerol (2AG) to glycerol and arachidonic acid (AA). Also displays an ester hydrolase activity against acetyl ester, butanoate ester and hexadecanoate ester. Plays a key role in sperm capacitation in response to progesterone by mediating degradation of 2AG, an inhibitor of the sperm calcium channel CatSper, leading to calcium influx via CatSper and sperm activation. May also play a role in smooth muscle cells migration. This is Monoacylglycerol lipase ABHD2 (ABHD2) from Bos taurus (Bovine).